The chain runs to 106 residues: ATP-dependent Clp protease adapter protein ClpS (106 aa).

Over residues 1-10 the composition is skewed to basic and acidic residues; sequence MSQKTVHDQD. The interval 1–23 is disordered; it reads MSQKTVHDQDNALLLETGNTKVA.

The protein belongs to the ClpS family. Binds to the N-terminal domain of the chaperone ClpA.

Involved in the modulation of the specificity of the ClpAP-mediated ATP-dependent protein degradation. The polypeptide is ATP-dependent Clp protease adapter protein ClpS (Xylella fastidiosa (strain M23)).